The chain runs to 157 residues: Cytochrome b6-f complex subunit 4 (157 aa).

3 consecutive transmembrane segments (helical) span residues 35-55 (ILYIFPVVILGTISFSLGLGV), 94-114 (LVGVLSLASVPVILVLTAFIE), and 130-150 (LVYLTSTCYALWLGYGSVLGI).

Belongs to the cytochrome b family. PetD subfamily. The 4 large subunits of the cytochrome b6-f complex are cytochrome b6, subunit IV (17 kDa polypeptide, petD), cytochrome f and the Rieske protein, while the 4 small subunits are petG, petL, petM and petN. The complex functions as a dimer.

It is found in the plastid. The protein localises to the chloroplast thylakoid membrane. Component of the cytochrome b6-f complex, which mediates electron transfer between photosystem II (PSII) and photosystem I (PSI), cyclic electron flow around PSI, and state transitions. This is Cytochrome b6-f complex subunit 4 from Amphidinium carterae (Dinoflagellate).